The sequence spans 575 residues: Transcription factor COE2 (575 aa).

Residues 62 to 65 (RKSN) form an interaction with DNA region. Residues 150 to 169 (CRVLLTHEVMCSRCCEKKSC) form a C5-type zinc finger. Interaction with DNA stretches follow at residues 196 to 203 (NCLKTAGN) and 235 to 238 (NNSK). In terms of domain architecture, IPT/TIG spans 253–336 (PCIKAISPSE…KGAPGRFIYT (84 aa)). The span at 441-453 (STQGNNQGYIRNT) shows a compositional bias: polar residues. The segment at 441 to 479 (STQGNNQGYIRNTSSISPRGYSSSSTPQQSNYSTSSNSM) is disordered. Residues 454–479 (SSISPRGYSSSSTPQQSNYSTSSNSM) show a composition bias toward low complexity.

It belongs to the COE family. In terms of assembly, forms either a homodimer or a heterodimer with a related family member. Interacts with SIX1.

The protein resides in the nucleus. Transcription factor that, in osteoblasts, activates the decoy receptor for RANKL, TNFRSF11B, which in turn regulates osteoclast differentiation. Acts in synergy with the Wnt-responsive LEF1/CTNNB1 pathway. Recognizes variations of the palindromic sequence 5'-ATTCCCNNGGGAATT-3'. This is Transcription factor COE2 (EBF2) from Homo sapiens (Human).